A 1748-amino-acid polypeptide reads, in one-letter code: WD repeat-containing protein 90 (1748 aa).

A binds with microtubules region spans residues 1-207 (MARAWQHPFL…VTPMPREMAF (207 aa)). Residue serine 241 is modified to Phosphoserine. The interval 274-308 (QTPSPTASGRAALAPRPFPEVSLSQERSDASNADG) is disordered. WD repeat units follow at residues 407–450 (GHTD…CLFR), 452–494 (PMHV…LGGE), 501–541 (AHTD…LRSC), 615–654 (SSGP…VLLE), 656–695 (EHEG…YHML), 698–737 (SHTA…QLYD), 740–779 (SSED…VLVE), 782–821 (CHRG…WHVL), 882–922 (SRLD…IIRE), 926–964 (VHPE…SPGP), 969–1009 (GHSE…QSFP), 1156–1201 (GHSA…CQHL), 1204–1245 (PHST…LVSS), 1247–1286 (RLPE…ADIS), 1298–1326 (VGAG…VCVW), 1327–1376 (DTRA…ELRC), 1433–1472 (GHRS…LVIQ), 1475–1520 (VLNQ…MELK), 1523–1562 (PHPV…TFRV), 1568–1614 (GAPI…NHCE), and 1715–1748 (GHDN…VPGL). The segment at 1004–1071 (SDQSFPGAPP…GARDTRNSGA (68 aa)) is disordered.

This sequence belongs to the WD repeat WDR90/POC16 family.

The protein resides in the cytoplasm. Its subcellular location is the cytoskeleton. The protein localises to the microtubule organizing center. It is found in the centrosome. It localises to the centriole. The protein resides in the centriolar satellite. Microtubule-binding protein that plays a crucial role in ensuring inner core protein localization within the centriole core, as well as in maintaining the microtubule wall integrity and the overall centriole roundness and stability. Required for efficient primary cilium formation. The polypeptide is WD repeat-containing protein 90 (WDR90) (Homo sapiens (Human)).